We begin with the raw amino-acid sequence, 244 residues long: Probable transcriptional regulatory protein DMR_30850 (244 aa).

Belongs to the TACO1 family.

It localises to the cytoplasm. The protein is Probable transcriptional regulatory protein DMR_30850 of Solidesulfovibrio magneticus (strain ATCC 700980 / DSM 13731 / RS-1) (Desulfovibrio magneticus).